The primary structure comprises 87 residues: U3-theraphotoxin-Hhn1a 17 (87 aa).

A signal peptide spans 1-24; it reads MVNVKASMFLTFAGLVLLFVVCYA. A propeptide spanning residues 25-52 is cleaved from the precursor; it reads SESEEKEFPKEMLSSIFAVDNDFKQEER. Cystine bridges form between cysteine 54-cysteine 67, cysteine 61-cysteine 72, and cysteine 66-cysteine 79.

The protein belongs to the neurotoxin 10 (Hwtx-1) family. 51 (Hntx-8) subfamily. Hntx-8 sub-subfamily. As to expression, expressed by the venom gland.

Its subcellular location is the secreted. Ion channel inhibitor. The sequence is that of U3-theraphotoxin-Hhn1a 17 from Cyriopagopus hainanus (Chinese bird spider).